A 528-amino-acid polypeptide reads, in one-letter code: Ankyrin repeat and death domain-containing protein 1B (528 aa).

ANK repeat units lie at residues 67-96, 100-129, 133-162, 166-197, 201-230, 234-263, 267-296, 300-329, 333-362, and 366-395; these read PNER…NINV, MNRT…RVDV, HGLT…DQRA, DGMS…DLNQ, KGRK…HTSE, GGNT…DINE, LNIS…DLHQ, PKES…DIDI, KQQT…DLKA, and QGKT…YYAW. The Death domain maps to 427–515; the sequence is TLLWDLAYHQ…KLAEKTRHFK (89 aa).

This chain is Ankyrin repeat and death domain-containing protein 1B (ANKDD1B), found in Homo sapiens (Human).